The chain runs to 428 residues: Gamma-glutamyl phosphate reductase (428 aa).

This sequence belongs to the gamma-glutamyl phosphate reductase family.

The protein resides in the cytoplasm. The enzyme catalyses L-glutamate 5-semialdehyde + phosphate + NADP(+) = L-glutamyl 5-phosphate + NADPH + H(+). It functions in the pathway amino-acid biosynthesis; L-proline biosynthesis; L-glutamate 5-semialdehyde from L-glutamate: step 2/2. In terms of biological role, catalyzes the NADPH-dependent reduction of L-glutamate 5-phosphate into L-glutamate 5-semialdehyde and phosphate. The product spontaneously undergoes cyclization to form 1-pyrroline-5-carboxylate. The chain is Gamma-glutamyl phosphate reductase from Picosynechococcus sp. (strain ATCC 27264 / PCC 7002 / PR-6) (Agmenellum quadruplicatum).